The sequence spans 306 residues: D-glucosamine-6-phosphate 4-epimerase (306 aa).

Residues 19-153 (DIPGVKTAEK…TGSNYRVQDL (135 aa)) form the SIS domain. Residue glutamate 200 is the Proton acceptor of the active site. Catalysis depends on histidine 216, which acts as the Proton donor. Arginine 296 serves as the catalytic Proton acceptor.

This sequence belongs to the PGI/PMI family.

The enzyme catalyses D-glucosamine 6-phosphate = D-galactosamine 6-phosphate. Its function is as follows. Involved in the synthesis of UDP-N-acetylgalactosamine (UDP-GalNAc). Catalyzes the conversion of glucosamine-6-phosphate (GlcN-6-P) to galactosamine-6-phosphate (GalN-6-P). The sequence is that of D-glucosamine-6-phosphate 4-epimerase from Sulfolobus acidocaldarius (strain ATCC 33909 / DSM 639 / JCM 8929 / NBRC 15157 / NCIMB 11770).